We begin with the raw amino-acid sequence, 780 residues long: cGMP-dependent protein kinase egl-4 (780 aa).

Disordered regions lie at residues 1-55 and 119-143; these read MSSG…QVQV and EQKAQSAASPGGQPPSPSPRTDQLG. Over residues 9–35 the composition is skewed to gly residues; it reads SGGGGGGGGASGGAGGGAPGGGGGGIR. A compositionally biased stretch (polar residues) spans 46-55; it reads DQPNGNQVQV. Residues 61–127 adopt a coiled-coil conformation; it reads EAHELQKLIP…LEQKAQSAAS (67 aa). 3',5'-cyclic GMP contacts are provided by residues 265-268, 275-276, R380, 389-392, 399-400, and Y434; these read GELA, RT, and GERA. The Protein kinase domain occupies 469–729; that stretch reads VKRLATLGVG…VNDIRKHRWF (261 aa). Residues 475-483 and K499 each bind ATP; that span reads LGVGGFGRV. The short motif at 492–504 is the Nuclear localization signal element; it reads KAKTFALKALKKK. The active-site Proton acceptor is the D593. Positions 730–780 constitute an AGC-kinase C-terminal domain; that stretch reads MGFDWEGLRSRTLKPPILPKVSNPADVTNFDNYPPDNDVPPDEFSGWDEGF. The segment at 757–780 is disordered; it reads TNFDNYPPDNDVPPDEFSGWDEGF.

This sequence belongs to the protein kinase superfamily. AGC Ser/Thr protein kinase family. cGMP subfamily. As to quaternary structure, when phosphorylated, interacts with saeg-2. May interact with saeg-1. Mg(2+) serves as cofactor. In terms of processing, autophosphorylated. In terms of tissue distribution, expressed in AWC sensory neurons (at protein level). Mainly expressed in head neurons, hypodermis, intestine and body wall muscles. L2 and L3 larvae show extensive expression, lower levels are observed in L4 larvae, later embryos and adults. Isoform c is expressed in a subset of neurons in the head, nerve ring, and ventral nerve cord including some motor neurons, also in several neurons in the tail, the pharyngeal marginal cells, body muscle, intestine, vulval muscles, and spermatheca.

It localises to the cytoplasm. It is found in the nucleus. The enzyme catalyses L-seryl-[protein] + ATP = O-phospho-L-seryl-[protein] + ADP + H(+). The catalysed reaction is L-threonyl-[protein] + ATP = O-phospho-L-threonyl-[protein] + ADP + H(+). With respect to regulation, binding of cGMP results in enzyme activation. Functionally, promotes chemoreceptor gene expression in response to increased cGMP levels by antagonizing the gene repression functions of the class II HDAC hda-4 and the mef-2 transcription factor. Regulates gene expression via recruitment of a histone deacetylase complex containing hda-2, saeg-1 and saeg-2. Represses body size and lifespan through the dbl-1 and insulin pathways, respectively. May also signal through daf-3 and/or daf-5. Role in egg-laying, dauer formation and motility. Regulates behavioral responses to various chemosensory stimuli in sensory neurons. Required for the initiation of long term adaptation to prolonged odor exposure which results in a decrease in odor seeking behavior. May regulate this process by phosphorylating tax-2, a subunit of cyclic nucleotide-gated channel tax-2/tax-4. In ASH sensory neurons, negatively regulates avoidance behavior to some bitter tastants, such as quinine, probably by phosphorylating rgs-2 and rgs-3 which are 2 regulator of G-protein signaling proteins. In AWB sensory neurons, involved in avoidance behavior to some repellent odors. In ASE left (ASEL) sensory neuron, involved in the sensing of environmental alkalinity downstream of receptor-type guanylate cyclase gcy-14. In sensory neurons, involved in the signaling pathway downstream of insulin, TGF-beta and receptor-type guanylate cyclase responsible for inducing quiescence after food intake. Might play a role in aversive olfactory learning in AWC neurons when an odor is associated with food deprivation, depending on the ins-1/age-1 signal from the AIA to the AWC neurons. Probably by regulating neuronal transmission downstream of lin-3 and receptor lin-23 and phospholipase plc-3 in ALA neurons, involved in the decrease in locomotion during the quiescent state that precedes each larval molt. This Caenorhabditis elegans protein is cGMP-dependent protein kinase egl-4.